Reading from the N-terminus, the 147-residue chain is Hemoglobin subunit delta (147 aa).

The Globin domain maps to 3–147 (HLTPEEKTAV…VANALAHKYH (145 aa)). S51 carries the post-translational modification Phosphoserine. Heme b-binding residues include H64 and H93.

The protein belongs to the globin family. In terms of assembly, heterotetramer of two delta chains and two alpha chains. Red blood cells.

In Gorilla gorilla gorilla (Western lowland gorilla), this protein is Hemoglobin subunit delta (HBD).